Reading from the N-terminus, the 363-residue chain is Peptide chain release factor 2 (363 aa).

Glutamine 251 is modified (N5-methylglutamine).

Belongs to the prokaryotic/mitochondrial release factor family. In terms of processing, methylated by PrmC. Methylation increases the termination efficiency of RF2.

The protein localises to the cytoplasm. In terms of biological role, peptide chain release factor 2 directs the termination of translation in response to the peptide chain termination codons UGA and UAA. This is Peptide chain release factor 2 from Helicobacter pylori (strain HPAG1).